Consider the following 888-residue polypeptide: 3-hydroxy-3-methylglutaryl-coenzyme A reductase (888 aa).

Residues 1 to 9 (MLSRLFRMH) lie on the Cytoplasmic side of the membrane. Residues 10-39 (GLFVASHPWEVIVGTVTLTICMMSMNMFTG) traverse the membrane as a helical segment. At 40–56 (NNKICGWNYECPKFEED) the chain is on the lumenal side. Residues 57–78 (VLSSDIIILTITRCIAILYIYF) form a helical membrane-spanning segment. An SSD domain is found at 61 to 218 (DIIILTITRC…MTFFPACVSL (158 aa)). The INSIG-binding motif signature appears at 75–78 (YIYF). Residues 79-89 (QFQNLRQLGSK) are Cytoplasmic-facing. Residue lysine 89 forms a Glycyl lysine isopeptide (Lys-Gly) (interchain with G-Cter in ubiquitin) linkage. Residues 90–114 (YILGIAGLFTIFSSFVFSTVVIHFL) traverse the membrane as a helical segment. Over 115–123 (DKELTGLNE) the chain is Lumenal. A helical membrane pass occupies residues 124-149 (ALPFFLLLIDLSRASTLAKFALSSNS). At 150 to 159 (QDEVRENIAR) the chain is on the cytoplasmic side. A helical transmembrane segment spans residues 160–187 (GMAILGPTFTLDALVECLVIGVGTMSGV). The Lumenal portion of the chain corresponds to 188 to 191 (RQLE). Residues 192 to 220 (IMCCFGCMSVLANYFVFMTFFPACVSLVL) form a helical membrane-spanning segment. Over 221–248 (ELSRESREGRPIWLLSHFARVLEEEENK) the chain is Cytoplasmic. Lysine 248 participates in a covalent cross-link: Glycyl lysine isopeptide (Lys-Gly) (interchain with G-Cter in ubiquitin). The chain crosses the membrane as a helical span at residues 249 to 275 (PNPVTQRVKMIMSLGLVLVHAHSRWIA). Residues 276–314 (DPSPQNSTADTSKVSLGLDENVSKRIEPSVSLWQFYLSK) are Lumenal-facing. Asparagine 281 and asparagine 296 each carry an N-linked (GlcNAc...) asparagine glycan. A helical transmembrane segment spans residues 315–339 (MISMDIEQVITLSLALLLAVKYIFF). The Cytoplasmic portion of the chain corresponds to 340-888 (EQTETESTLS…LQGACTKKTA (549 aa)). Residues glutamate 559, lysine 691, and aspartate 767 each act as charge relay system in the active site. Histidine 866 serves as the catalytic Proton donor. Serine 872 bears the Phosphoserine; by AMPK mark.

It belongs to the HMG-CoA reductase family. As to quaternary structure, homotetramer. Homodimer. Interacts (via its SSD) with INSIG1; the interaction, accelerated by sterols, leads to the recruitment of HMGCR to AMFR/gp78 for its ubiquitination by the sterol-mediated ERAD pathway. Interacts with UBIAD1. In terms of processing, undergoes sterol-mediated ubiquitination and ER-associated degradation (ERAD). Accumulation of sterols in the endoplasmic reticulum (ER) membrane, triggers binding of the reductase to the ER membrane protein INSIG1 or INSIG2. The INSIG1 binding leads to the recruitment of the ubiquitin ligase, AMFR/gp78, RNF139 or RNF145, initiating ubiquitination of the reductase. The ubiquitinated reductase is then extracted from the ER membrane and delivered to cytosolic 26S proteosomes by a mechanism probably mediated by the ATPase Valosin-containing protein VCP/p97. The INSIG2-binding leads to the recruitment of the ubiquitin ligase RNF139, initiating ubiquitination of the reductase. Lys-248 is the main site of ubiquitination. Ubiquitination is enhanced by the presence of a geranylgeranylated protein. N-glycosylated. Deglycosylated by NGLY1 on release from the endoplasmic reticulum (ER) in a sterol-mediated manner. Post-translationally, phosphorylated. Phosphorylation at Ser-872 reduces the catalytic activity.

The protein resides in the endoplasmic reticulum membrane. It is found in the peroxisome membrane. The catalysed reaction is (R)-mevalonate + 2 NADP(+) + CoA = (3S)-3-hydroxy-3-methylglutaryl-CoA + 2 NADPH + 2 H(+). Its pathway is metabolic intermediate biosynthesis; (R)-mevalonate biosynthesis; (R)-mevalonate from acetyl-CoA: step 3/3. Regulated by a negative feedback mechanism through sterols and non-sterol metabolites derived from mevalonate. Phosphorylation at Ser-872 down-regulates the catalytic activity. Its function is as follows. Catalyzes the conversion of (3S)-hydroxy-3-methylglutaryl-CoA (HMG-CoA) to mevalonic acid, the rate-limiting step in the synthesis of cholesterol and other isoprenoids, thus plays a critical role in cellular cholesterol homeostasis. This chain is 3-hydroxy-3-methylglutaryl-coenzyme A reductase (HMGCR), found in Pongo abelii (Sumatran orangutan).